Consider the following 368-residue polypeptide: Putative glutamate--cysteine ligase 2 (368 aa).

The protein belongs to the glutamate--cysteine ligase type 2 family. YbdK subfamily.

The catalysed reaction is L-cysteine + L-glutamate + ATP = gamma-L-glutamyl-L-cysteine + ADP + phosphate + H(+). Functionally, ATP-dependent carboxylate-amine ligase which exhibits weak glutamate--cysteine ligase activity. The sequence is that of Putative glutamate--cysteine ligase 2 from Pseudomonas putida (strain ATCC 47054 / DSM 6125 / CFBP 8728 / NCIMB 11950 / KT2440).